A 318-amino-acid polypeptide reads, in one-letter code: tRNA-modifying protein YgfZ (318 aa).

Residues W28 and W182 each contribute to the folate site.

This sequence belongs to the tRNA-modifying YgfZ family.

The protein resides in the cytoplasm. In terms of biological role, folate-binding protein involved in regulating the level of ATP-DnaA and in the modification of some tRNAs. It is probably a key factor in regulatory networks that act via tRNA modification, such as initiation of chromosomal replication. The chain is tRNA-modifying protein YgfZ from Aliivibrio fischeri (strain MJ11) (Vibrio fischeri).